A 223-amino-acid chain; its full sequence is UPF0502 protein Sbal_1765 (223 aa).

This sequence belongs to the UPF0502 family.

This is UPF0502 protein Sbal_1765 from Shewanella baltica (strain OS155 / ATCC BAA-1091).